A 668-amino-acid chain; its full sequence is mRNA cap guanine-N(7) methyltransferase (668 aa).

The span at 1-19 (MYDPARDSWEERDGDEARS) shows a compositional bias: basic and acidic residues. The interval 1 to 281 (MYDPARDSWE…RAQVEEAMRA (281 aa)) is disordered. Residues 44–65 (GENNNTTDLQQHPDPSSKTTAS) are compositionally biased toward polar residues. Residues 73 to 88 (SQPAQPTTQTPPSVST) are compositionally biased toward low complexity. The span at 100-129 (KASNPQSLTSTAQNQLNKSNTTMENTSGSA) shows a compositional bias: polar residues. A compositionally biased stretch (basic and acidic residues) spans 133–142 (PRADPSDKPN). Over residues 148 to 157 (ASPTDQNGSQ) the composition is skewed to polar residues. Residues 257-279 (LVDRETLRRRQEERERAQVEEAM) show a composition bias toward basic and acidic residues. The 359-residue stretch at 310-668 (SKIKGLRSFN…FYHAFCFYKV (359 aa)) folds into the mRNA cap 0 methyltransferase domain. 319 to 320 (NN) is an mRNA binding site. Residues lysine 323, glycine 366, aspartate 390, aspartate 428, 471–473 (MFT), and tyrosine 476 each bind S-adenosyl-L-methionine. The interval 524-547 (ARQAQAKKEKSDEAPEDGEVEEDD) is disordered. Over residues 537–547 (APEDGEVEEDD) the composition is skewed to acidic residues.

It belongs to the class I-like SAM-binding methyltransferase superfamily. mRNA cap 0 methyltransferase family.

It localises to the nucleus. It carries out the reaction a 5'-end (5'-triphosphoguanosine)-ribonucleoside in mRNA + S-adenosyl-L-methionine = a 5'-end (N(7)-methyl 5'-triphosphoguanosine)-ribonucleoside in mRNA + S-adenosyl-L-homocysteine. Its function is as follows. Responsible for methylating the 5'-cap structure of mRNAs. The chain is mRNA cap guanine-N(7) methyltransferase (abd1) from Aspergillus fumigatus (strain ATCC MYA-4609 / CBS 101355 / FGSC A1100 / Af293) (Neosartorya fumigata).